We begin with the raw amino-acid sequence, 230 residues long: V-type proton ATPase subunit E (230 aa).

The protein belongs to the V-ATPase E subunit family. In terms of assembly, V-ATPase is a heteromultimeric enzyme composed of a peripheral catalytic V1 complex (components A to H) attached to an integral membrane V0 proton pore complex (components: a, c, c', c'' and d).

Its function is as follows. Subunit of the peripheral V1 complex of vacuolar ATPase essential for assembly or catalytic function. V-ATPase is responsible for acidifying a variety of intracellular compartments in eukaryotic cells. The protein is V-type proton ATPase subunit E (VATE) of Citrus limon (Lemon).